A 336-amino-acid chain; its full sequence is Retinol dehydrogenase 10-B (336 aa).

The chain crosses the membrane as a helical; Signal-anchor span at residues 7-27 (LFVVTFKIIWSFVLAGAKWFI). 40–64 (VITGAGSGLGRLFALEFARRRATLV) is an NADP(+) binding site. Residue Ser192 participates in substrate binding. Tyr205 serves as the catalytic Proton acceptor.

This sequence belongs to the short-chain dehydrogenases/reductases (SDR) family.

The protein resides in the microsome membrane. The protein localises to the endoplasmic reticulum membrane. The enzyme catalyses all-trans-retinol + NADP(+) = all-trans-retinal + NADPH + H(+). It functions in the pathway cofactor metabolism; retinol metabolism. In terms of biological role, retinol dehydrogenase with a clear preference for NADP. Converts all-trans-retinol to all-trans-retinal. Has no detectable activity towards 11-cis-retinol, 9-cis-retinol and 13-cis-retinol. The protein is Retinol dehydrogenase 10-B (rdh10b) of Danio rerio (Zebrafish).